A 297-amino-acid polypeptide reads, in one-letter code: N-acetylmuramic acid 6-phosphate etherase (297 aa).

An SIS domain is found at 55-218 (AAAALKSGGR…STGAMVKFGK (164 aa)). Glu83 serves as the catalytic Proton donor. Residue Glu114 is part of the active site.

It belongs to the GCKR-like family. MurNAc-6-P etherase subfamily. Homodimer.

It catalyses the reaction N-acetyl-D-muramate 6-phosphate + H2O = N-acetyl-D-glucosamine 6-phosphate + (R)-lactate. Its pathway is amino-sugar metabolism; 1,6-anhydro-N-acetylmuramate degradation. It participates in amino-sugar metabolism; N-acetylmuramate degradation. It functions in the pathway cell wall biogenesis; peptidoglycan recycling. In terms of biological role, specifically catalyzes the cleavage of the D-lactyl ether substituent of MurNAc 6-phosphate, producing GlcNAc 6-phosphate and D-lactate. Together with AnmK, is also required for the utilization of anhydro-N-acetylmuramic acid (anhMurNAc) either imported from the medium or derived from its own cell wall murein, and thus plays a role in cell wall recycling. In Salmonella paratyphi B (strain ATCC BAA-1250 / SPB7), this protein is N-acetylmuramic acid 6-phosphate etherase.